The chain runs to 155 residues: Ribosome maturation factor RimP (155 aa).

The protein belongs to the RimP family.

It localises to the cytoplasm. Its function is as follows. Required for maturation of 30S ribosomal subunits. This Listeria monocytogenes serotype 4b (strain CLIP80459) protein is Ribosome maturation factor RimP.